Reading from the N-terminus, the 206-residue chain is Ribosomal RNA large subunit methyltransferase E (206 aa).

S-adenosyl-L-methionine is bound by residues Gly-55, Trp-57, Asp-75, Asp-91, and Asp-116. The active-site Proton acceptor is the Lys-156.

Belongs to the class I-like SAM-binding methyltransferase superfamily. RNA methyltransferase RlmE family.

The protein resides in the cytoplasm. It catalyses the reaction uridine(2552) in 23S rRNA + S-adenosyl-L-methionine = 2'-O-methyluridine(2552) in 23S rRNA + S-adenosyl-L-homocysteine + H(+). In terms of biological role, specifically methylates the uridine in position 2552 of 23S rRNA at the 2'-O position of the ribose in the fully assembled 50S ribosomal subunit. This is Ribosomal RNA large subunit methyltransferase E from Blochmanniella floridana.